The chain runs to 492 residues: Probable cobyric acid synthase (492 aa).

A GATase cobBQ-type domain is found at 252 to 444; it reads PIEVNIVKFS…FHGILENFEF (193 aa). The Nucleophile role is filled by Cys-330. Residue His-436 is part of the active site.

It belongs to the CobB/CobQ family. CobQ subfamily.

The protein operates within cofactor biosynthesis; adenosylcobalamin biosynthesis. In terms of biological role, catalyzes amidations at positions B, D, E, and G on adenosylcobyrinic A,C-diamide. NH(2) groups are provided by glutamine, and one molecule of ATP is hydrogenolyzed for each amidation. This is Probable cobyric acid synthase from Methanococcus maripaludis (strain C5 / ATCC BAA-1333).